The chain runs to 308 residues: Eukaryotic translation initiation factor 3 subunit G (308 aa).

Residues 1–23 form a disordered region; that stretch reads MAPVAAPSTSQPAGGKPMNWADE. One can recognise an RRM domain in the interval 225 to 303; the sequence is PTLRVTNLSE…LILSCQWSLP (79 aa).

Belongs to the eIF-3 subunit G family. As to quaternary structure, component of the eukaryotic translation initiation factor 3 (eIF-3) complex.

It is found in the cytoplasm. In terms of biological role, RNA-binding component of the eukaryotic translation initiation factor 3 (eIF-3) complex, which is involved in protein synthesis of a specialized repertoire of mRNAs and, together with other initiation factors, stimulates binding of mRNA and methionyl-tRNAi to the 40S ribosome. The eIF-3 complex specifically targets and initiates translation of a subset of mRNAs involved in cell proliferation. This subunit can bind 18S rRNA. The chain is Eukaryotic translation initiation factor 3 subunit G from Mycosarcoma maydis (Corn smut fungus).